The primary structure comprises 459 residues: 3-carboxy-cis,cis-muconate cycloisomerase (459 aa).

This sequence belongs to the class-II fumarase/aspartase family. As to quaternary structure, homotetramer.

The protein localises to the cytoplasm. It catalyses the reaction 2-(carboxymethyl)-5-oxo-2,5-dihydro-2-furoate = 3-carboxy-cis,cis-muconate + H(+). The protein operates within aromatic compound metabolism; beta-ketoadipate pathway; 5-oxo-4,5-dihydro-2-furylacetate from 3-carboxy-cis,cis-muconate: step 1/2. Catalyzes an anti cycloisomerization. The sequence is that of 3-carboxy-cis,cis-muconate cycloisomerase (pcaB) from Pseudomonas aeruginosa (strain ATCC 15692 / DSM 22644 / CIP 104116 / JCM 14847 / LMG 12228 / 1C / PRS 101 / PAO1).